Consider the following 227-residue polypeptide: Small ribosomal subunit protein uS7 (227 aa).

Composition is skewed to acidic residues over residues 1–12 (MSESDTDPDIDD) and 20–31 (NDVDVAVDESES). The tract at residues 1–43 (MSESDTDPDIDDDAHNNGDNDVDVAVDESESAETTTDTDTASA) is disordered. Positions 32 to 43 (AETTTDTDTASA) are enriched in low complexity.

Belongs to the universal ribosomal protein uS7 family. Part of the 30S ribosomal subunit.

In terms of biological role, one of the primary rRNA binding proteins, it binds directly to 16S rRNA where it nucleates assembly of the head domain of the 30S subunit. Is located at the subunit interface close to the decoding center. This is Small ribosomal subunit protein uS7 from Haloquadratum walsbyi (strain DSM 16790 / HBSQ001).